Reading from the N-terminus, the 397-residue chain is MAKEKFERNKPHVNVGTIGHVDHGKTTLTAALTKVCSDTWGGSARAFDQIDNAPEEKARGITINTSHVEYDSAVRHYAHVDCPGHADYVKNMITGAAQMDGAILVCSAADGPMPQTREHILLSRQVGVPYIVVFLNKADMVDDAELLELVEMEVRDLLNTYDFPGDDTPIIIGSALMALEGKDDNGIGVSAVQKLVETLDSYIPEPVRAIDQPFLMPIEDVFSISGRGTVVTGRVERGIIKVQEEVEIVGIKATTKTTCTGVEMFRKLLDEGRAGENVGILLRGTKREDVERGQVLAKPGTIKPHTKFECEVYVLSKEEGGRHTPFFKGYRPQFYFRTTDVTGNCELPEGVEMVMPGDNIKMVVTLIAPIAMEDGLRFAIREGGRTVGAGVVAKIIE.

Residues 10–207 (KPHVNVGTIG…TLDSYIPEPV (198 aa)) enclose the tr-type G domain. Residues 19–26 (GHVDHGKT) form a G1 region. 19 to 26 (GHVDHGKT) is a GTP binding site. Mg(2+) is bound at residue Thr26. The G2 stretch occupies residues 60-64 (GITIN). A Phosphotyrosine modification is found at Tyr77. The tract at residues 81–84 (DCPG) is G3. 81–85 (DCPGH) is a GTP binding site. Residue Tyr88 is modified to Phosphotyrosine. 136–139 (NKAD) contacts GTP. Residues 136–139 (NKAD) form a G4 region. Positions 174-176 (SAL) are G5.

Belongs to the TRAFAC class translation factor GTPase superfamily. Classic translation factor GTPase family. EF-Tu/EF-1A subfamily. As to quaternary structure, monomer.

It is found in the cytoplasm. It catalyses the reaction GTP + H2O = GDP + phosphate + H(+). Its function is as follows. GTP hydrolase that promotes the GTP-dependent binding of aminoacyl-tRNA to the A-site of ribosomes during protein biosynthesis. The polypeptide is Elongation factor Tu (Pseudomonas aeruginosa (strain UCBPP-PA14)).